Consider the following 184-residue polypeptide: Probable RNA 2'-phosphotransferase (184 aa).

The protein belongs to the KptA/TPT1 family.

Its function is as follows. Removes the 2'-phosphate from RNA via an intermediate in which the phosphate is ADP-ribosylated by NAD followed by a presumed transesterification to release the RNA and generate ADP-ribose 1''-2''-cyclic phosphate (APPR&gt;P). May function as an ADP-ribosylase. The sequence is that of Probable RNA 2'-phosphotransferase from Shigella boydii serotype 18 (strain CDC 3083-94 / BS512).